A 481-amino-acid polypeptide reads, in one-letter code: MLRGARSHLPASVAPAAVLAAALLSSFARCSLPGRGDPVASVLSPYFGTKTRYEDANPWLLVDPVAPRRDPELLAGTCTPVQLVALIRHGTRYPTTKQIRKLKQLQGLLQTRESRDGGSQVAAALAEWPLWYGDWMDGQLVEKGRQDMRQLALRLAALFPDLFSRENYDRLRLITSSKHRCVDSSAAFLQGLWQHYHPGLPPPDVSDMECGPPRINDKLMRFFDHCEKFLTDVERNETALYHVEAFKTGPEMQKVLKKVAATLQVPMNSLNADLIQVAFFTCSFDLAIKGVHSPWCDVFDVDDARVLEYLNDLKQYWKRSYGYTINSRSSCNLFQDIFLHLDKAVEQKQRSQPVSSPVILQFGHAETLLPLLSLMGYFKDKEPLTAYNFEEQVNRKFRSGHIVPYASNLIFVLYHCDNAQSPEEQFQIQLLLNEKVLPLAHSQRPVGLYEELKTHYRDILQSCQTSKECSPPKANITSDEL.

The signal sequence occupies residues 1 to 30; that stretch reads MLRGARSHLPASVAPAAVLAAALLSSFARC. H89 is an active-site residue. 2 N-linked (GlcNAc...) asparagine glycosylation sites follow: N236 and N475. The Prevents secretion from ER motif lies at 478–481; that stretch reads SDEL.

The protein belongs to the histidine acid phosphatase family. MINPP1 subfamily. N-glycosylated. In terms of tissue distribution, widely expressed with highest levels in kidney, intestine, thymus and liver.

Its subcellular location is the endoplasmic reticulum lumen. It is found in the secreted. It localises to the cell membrane. The catalysed reaction is 1D-myo-inositol hexakisphosphate + H2O = 1D-myo-inositol 1,2,4,5,6-pentakisphosphate + phosphate. The enzyme catalyses 1D-myo-inositol 1,2,4,5,6-pentakisphosphate + H2O = 1D-myo-inositol 1,2,5,6-tetrakisphosphate + phosphate. It carries out the reaction 1D-myo-inositol 1,2,5,6-tetrakisphosphate + H2O = 1D-myo-inositol 1,2,6-trisphosphate + phosphate. It catalyses the reaction 1D-myo-inositol 1,2,6-trisphosphate + H2O = 1D-myo-inositol 1,2-bisphosphate + phosphate. The catalysed reaction is 1D-myo-inositol 1,2-bisphosphate + H2O = 1D-myo-inositol 2-phosphate + phosphate. The enzyme catalyses 1D-myo-inositol hexakisphosphate + H2O = 1D-myo-inositol 1,2,3,5,6-pentakisphosphate + phosphate. It carries out the reaction 1D-myo-inositol 1,2,3,5,6-pentakisphosphate + H2O = 1D-myo-inositol 1,2,3,6-tetrakisphosphate + phosphate. It catalyses the reaction 1D-myo-inositol 1,2,3,6-tetrakisphosphate + H2O = 1D-myo-inositol 1,2,3-trisphosphate + phosphate. The catalysed reaction is 1D-myo-inositol 1,2,3-trisphosphate + H2O = 1D-myo-inositol 2,3-bisphosphate + phosphate. The enzyme catalyses 1D-myo-inositol 2,3-bisphosphate + H2O = 1D-myo-inositol 2-phosphate + phosphate. It carries out the reaction 1D-myo-inositol 1,3,4,5,6-pentakisphosphate + H2O = 1D-myo-inositol 1,4,5,6-tetrakisphosphate + phosphate. It catalyses the reaction 1D-myo-inositol 1,4,5,6-tetrakisphosphate + H2O = 1D-myo-inositol 1,4,5-trisphosphate + phosphate. The catalysed reaction is (2R)-2,3-bisphosphoglycerate + H2O = (2R)-2-phosphoglycerate + phosphate. Functionally, multiple inositol polyphosphate phosphatase that hydrolyzes 1D-myo-inositol 1,3,4,5,6-pentakisphosphate (InsP5[2OH]) and 1D-myo-inositol hexakisphosphate (InsP6) to a range of less phosphorylated inositol phosphates. This regulates the availability of these various small molecule second messengers and metal chelators which control many aspects of cell physiology. Has a weak in vitro activity towards 1D-myo-inositol 1,4,5-trisphosphate which is unlikely to be physiologically relevant. By regulating intracellular inositol polyphosphates pools, which act as metal chelators, it may control the availability of intracellular calcium and iron, which are important for proper neuronal development and homeostasis. May have a dual substrate specificity, and function as a 2,3-bisphosphoglycerate 3-phosphatase hydrolyzing 2,3-bisphosphoglycerate to 2-phosphoglycerate. 2,3-bisphosphoglycerate (BPG) is formed as part of the Rapoport-Luebering glycolytic bypass and is a regulator of systemic oxygen homeostasis as the major allosteric effector of hemoglobin. This chain is Multiple inositol polyphosphate phosphatase 1, found in Mus musculus (Mouse).